The primary structure comprises 543 residues: CTP synthase (543 aa).

The amidoligase domain stretch occupies residues 1-267 (MKQTKYIFVT…LNPIAEILDL (267 aa)). Serine 15 contacts CTP. Serine 15 is a UTP binding site. Residues 16–21 (SLGKGI) and aspartate 73 each bind ATP. Mg(2+) is bound by residues aspartate 73 and glutamate 141. CTP is bound by residues 148–150 (DIE), 188–193 (KTKPTQ), and lysine 224. UTP is bound by residues 188–193 (KTKPTQ) and lysine 224. Residues 292 to 543 (KIAFVGKYVD…IKAAINYEDN (252 aa)) enclose the Glutamine amidotransferase type-1 domain. Glycine 354 is an L-glutamine binding site. Catalysis depends on cysteine 381, which acts as the Nucleophile; for glutamine hydrolysis. L-glutamine is bound by residues 382–385 (LGMQ), glutamate 405, and arginine 473. Catalysis depends on residues histidine 516 and glutamate 518.

This sequence belongs to the CTP synthase family. In terms of assembly, homotetramer.

It catalyses the reaction UTP + L-glutamine + ATP + H2O = CTP + L-glutamate + ADP + phosphate + 2 H(+). The catalysed reaction is L-glutamine + H2O = L-glutamate + NH4(+). It carries out the reaction UTP + NH4(+) + ATP = CTP + ADP + phosphate + 2 H(+). It participates in pyrimidine metabolism; CTP biosynthesis via de novo pathway; CTP from UDP: step 2/2. With respect to regulation, allosterically activated by GTP, when glutamine is the substrate; GTP has no effect on the reaction when ammonia is the substrate. The allosteric effector GTP functions by stabilizing the protein conformation that binds the tetrahedral intermediate(s) formed during glutamine hydrolysis. Inhibited by the product CTP, via allosteric rather than competitive inhibition. Functionally, catalyzes the ATP-dependent amination of UTP to CTP with either L-glutamine or ammonia as the source of nitrogen. Regulates intracellular CTP levels through interactions with the four ribonucleotide triphosphates. This is CTP synthase from Campylobacter jejuni subsp. doylei (strain ATCC BAA-1458 / RM4099 / 269.97).